A 232-amino-acid polypeptide reads, in one-letter code: Ubiquinone biosynthesis O-methyltransferase (232 aa).

S-adenosyl-L-methionine contacts are provided by Arg-36, Gly-55, Asp-76, and Leu-120.

The protein belongs to the methyltransferase superfamily. UbiG/COQ3 family.

The enzyme catalyses a 3-demethylubiquinol + S-adenosyl-L-methionine = a ubiquinol + S-adenosyl-L-homocysteine + H(+). It catalyses the reaction a 3-(all-trans-polyprenyl)benzene-1,2-diol + S-adenosyl-L-methionine = a 2-methoxy-6-(all-trans-polyprenyl)phenol + S-adenosyl-L-homocysteine + H(+). It functions in the pathway cofactor biosynthesis; ubiquinone biosynthesis. Functionally, O-methyltransferase that catalyzes the 2 O-methylation steps in the ubiquinone biosynthetic pathway. This Stutzerimonas stutzeri (strain A1501) (Pseudomonas stutzeri) protein is Ubiquinone biosynthesis O-methyltransferase.